The chain runs to 237 residues: N-alpha-acetyltransferase 40 (237 aa).

The N-myristoyl glycine moiety is linked to residue Gly-2. In terms of domain architecture, N-acetyltransferase spans 63–216; sequence SGLEPATVDW…EDCSYEILSR (154 aa). Substrate-binding positions include Tyr-85, 127 to 129, and Tyr-138; that span reads DVE. Acetyl-CoA is bound by residues 140–142 and 148–153; these read VQL and RKGLGK. A substrate-binding site is contributed by Thr-174. An acetyl-CoA-binding site is contributed by Asn-179. The substrate site is built by Ser-197 and Tyr-211.

The protein belongs to the acetyltransferase family. NAA40 subfamily. As to expression, widely expressed; with the highest expression level in liver and the lowest expression in brain (at protein level).

Its subcellular location is the cytoplasm. It is found in the nucleus. The enzyme catalyses N-terminal L-seryl-[histone H4] + acetyl-CoA = N-terminal N(alpha)-acetyl-L-seryl-[histone H4] + CoA + H(+). It carries out the reaction N-terminal L-seryl-[histone H2A] + acetyl-CoA = N-terminal N(alpha)-acetyl-L-seryl-[histone H2A] + CoA + H(+). Functionally, N-alpha-acetyltransferase that specifically mediates the acetylation of the N-terminal residues of histones H4 and H2A. In contrast to other N-alpha-acetyltransferase, has a very specific selectivity for histones H4 and H2A N-terminus and specifically recognizes the 'Ser-Gly-Arg-Gly sequence'. Acts as a negative regulator of apoptosis. May play a role in hepatic lipid metabolism. This is N-alpha-acetyltransferase 40 from Homo sapiens (Human).